We begin with the raw amino-acid sequence, 68 residues long: Large ribosomal subunit protein bL35 (68 aa).

A disordered region spans residues 29–68 (GGVSHYNTKKSSKRKRQGRKPQYVPKNLEHKVKALLPNDV). Residues 35 to 47 (NTKKSSKRKRQGR) are compositionally biased toward basic residues.

Belongs to the bacterial ribosomal protein bL35 family.

The chain is Large ribosomal subunit protein bL35 from Sulfurihydrogenibium sp. (strain YO3AOP1).